A 145-amino-acid chain; its full sequence is Photosystem I reaction center subunit VI-2, chloroplastic (145 aa).

The transit peptide at 1–50 directs the protein to the chloroplast; sequence MASFATIAAVQPSAAVKGLGGSSLAGAKLFIKPSRQSFKTKSTRAGAVVA. The chain crosses the membrane as a helical span at residues 102–118; sequence LLLKFLILGGGSLLTYV. The disordered stretch occupies residues 126–145; the sequence is VLPIKRGPQEPPKLGPRGKL.

This sequence belongs to the psaH family.

The protein localises to the plastid. Its subcellular location is the chloroplast thylakoid membrane. Possible role could be the docking of the LHC I antenna complex to the core complex. The protein is Photosystem I reaction center subunit VI-2, chloroplastic (PSAH2) of Arabidopsis thaliana (Mouse-ear cress).